A 144-amino-acid chain; its full sequence is Large ribosomal subunit protein uL13 (144 aa).

This sequence belongs to the universal ribosomal protein uL13 family. Part of the 50S ribosomal subunit.

This protein is one of the early assembly proteins of the 50S ribosomal subunit, although it is not seen to bind rRNA by itself. It is important during the early stages of 50S assembly. The chain is Large ribosomal subunit protein uL13 from Magnetococcus marinus (strain ATCC BAA-1437 / JCM 17883 / MC-1).